A 1291-amino-acid polypeptide reads, in one-letter code: Histone-lysine N-methyltransferase SETDB1 (1291 aa).

A coiled-coil region spans residues 18-64 (ESEEIAELQQAVVEELGISMEELRHFIDEELEKMDCVQQRKKQLAEL). Residues 108–147 (RDSSSEDESSRPTEIIEIPDEDDDVLSIDSGDAGSRTPKD) form a disordered region. 2 positions are modified to phosphoserine: Ser112 and Ser117. Position 120 is a phosphothreonine (Thr120). Residues 124–133 (EIPDEDDDVL) show a composition bias toward acidic residues. Lys182 is covalently cross-linked (Glycyl lysine isopeptide (Lys-Gly) (interchain with G-Cter in SUMO2); alternate). Lys182 is covalently cross-linked (Glycyl lysine isopeptide (Lys-Gly) (interchain with G-Cter in ubiquitin); alternate). Tudor domains lie at 257 to 320 (KLYV…LKKT) and 347 to 403 (LLKS…SMKT). The segment at 404-545 (SSASALEKKQ…APAPSALPAP (142 aa)) is disordered. Positions 433 to 444 (QYTQDLTGTGTQ) are enriched in polar residues. The segment covering 448 to 468 (VEPPQPTAPPAPPFPPAPPLS) has biased composition (pro residues). The segment covering 477 to 515 (ESQLAQSRKQVAKKSTSFRPGSVGSGHSSPTSPALSENV) has biased composition (polar residues). Positions 528–539 (SPLGSTASAPAP) are enriched in low complexity. The MBD domain maps to 594 to 665 (YRGKNPLLVP…EMFCLDPYVL (72 aa)). The Pre-SET domain maps to 727–800 (VGCDCKDGCR…MCTNRLVQHG (74 aa)). Zn(2+)-binding residues include Cys729, Cys731, Cys735, Cys741, Cys743, Cys781, Cys785, Cys787, and Cys792. An SET domain is found at 803 to 1266 (VRLQLFKTQN…AGTELTWDYN (464 aa)). Residues 813–815 (KGW), Asp851, and Tyr853 each bind S-adenosyl-L-methionine. Lys867 is covalently cross-linked (Glycyl lysine isopeptide (Lys-Gly) (interchain with G-Cter in ubiquitin)). A disordered region spans residues 868–1160 (EGYESDAPCS…MTGPMKRQVA (293 aa)). A compositionally biased stretch (acidic residues) spans 896 to 907 (EDPEESNDDSSD). A compositionally biased stretch (pro residues) spans 951–963 (DLGPPHIPVPPSI). The residue at position 1025 (Ser1025) is a Phosphoserine. Residues 1031 to 1050 (IKDEGDIKQAKKEDTDDRNK) are compositionally biased toward basic and acidic residues. Lys1032 is covalently cross-linked (Glycyl lysine isopeptide (Lys-Gly) (interchain with G-Cter in SUMO2); alternate). Lys1032 participates in a covalent cross-link: Glycyl lysine isopeptide (Lys-Gly) (interchain with G-Cter in SUMO1); alternate. A Glycyl lysine isopeptide (Lys-Gly) (interchain with G-Cter in SUMO2) cross-link involves residue Lys1038. The span at 1052 to 1063 (SVVTESSRNYGY) shows a compositional bias: polar residues. Ser1066 carries the post-translational modification Phosphoserine. A Glycyl lysine isopeptide (Lys-Gly) (interchain with G-Cter in SUMO2) cross-link involves residue Lys1069. Residues 1100-1115 (LTLSSSTESEGESGTS) are compositionally biased toward low complexity. A compositionally biased stretch (polar residues) spans 1116–1140 (RKPTAGQTSATAVDSDDIQTISSGS). Lys1149 participates in a covalent cross-link: Glycyl lysine isopeptide (Lys-Gly) (interchain with G-Cter in SUMO2). N6,N6,N6-trimethyllysine; alternate is present on residues Lys1170 and Lys1178. Residues Lys1170 and Lys1178 each carry the N6,N6-dimethyllysine; alternate modification. S-adenosyl-L-methionine is bound by residues Arg1220 and 1223 to 1224 (NH). Zn(2+) contacts are provided by Cys1226, Cys1279, Cys1281, and Cys1286. A Post-SET domain is found at 1275–1291 (KELLCCCGAIECRGRLL).

The protein belongs to the class V-like SAM-binding methyltransferase superfamily. Histone-lysine methyltransferase family. Suvar3-9 subfamily. As to quaternary structure, part of a complex containing at least CDYL, REST, WIZ, SETDB1, EHMT1 and EHMT2. Forms a complex with ATRX, TRIM28 and ZNF274. Probably part of a corepressor complex containing ZNF304, TRIM28, SETDB1 and DNMT1. Interacts with TRIM28/TIF1B. Interacts with ATF7IP and ATF7IP2; the interaction with ATF7IP protects SETDB1 from proteasomal degradation and is required to stimulate histone methyltransferase activity and facilitate the conversion of dimethylated to trimethylated H3 'Lys-9'. Interacts with CBX1 and CBX5. Interacts with DNMT3A and DNMT3B. Interacts with SUMO2. Interacts with MPHOSPH8. Interacts with ERG. Interacts with HDAC1, HDAC2, SIN3A and SIN3B. Interacts with ATRX. Interacts with RESF1. Interacts with ZNF638. Interacts with TASOR. Interacts with ZNF263; recruited to the SIX3 promoter along with other proteins involved in chromatin modification and transcriptional corepression where it contributes to transcriptional repression. Interacts with PHF13; the interaction probably enhances SETDB1 chromatin-associated levels and activity. Interacts with VRK1. Degraded by the proteasome, shielded by interaction with ATF7IP. Post-translationally, monoubiquitinated at Lys-867 by E2 enzymes of the UBE2E family. The conjugated-Ub is protected from deubiquitination by the SET domain. Monoubiquitination at Lys-867 is required for catalytic activity, H3K9 methylation and endogenous retrovirus silencing. In terms of tissue distribution, widely expressed. High expression in testis.

The protein localises to the nucleus. It localises to the cytoplasm. The protein resides in the chromosome. The catalysed reaction is N(6),N(6)-dimethyl-L-lysyl(9)-[histone H3] + S-adenosyl-L-methionine = N(6),N(6),N(6)-trimethyl-L-lysyl(9)-[histone H3] + S-adenosyl-L-homocysteine + H(+). Functionally, histone methyltransferase that specifically trimethylates 'Lys-9' of histone H3. H3 'Lys-9' trimethylation represents a specific tag for epigenetic transcriptional repression by recruiting HP1 (CBX1, CBX3 and/or CBX5) proteins to methylated histones. Mainly functions in euchromatin regions, thereby playing a central role in the silencing of euchromatic genes. H3 'Lys-9' trimethylation is coordinated with DNA methylation. Required for HUSH-mediated heterochromatin formation and gene silencing. Forms a complex with MBD1 and ATF7IP that represses transcription and couples DNA methylation and histone 'Lys-9' trimethylation. Its activity is dependent on MBD1 and is heritably maintained through DNA replication by being recruited by CAF-1. SETDB1 is targeted to histone H3 by TRIM28/TIF1B, a factor recruited by KRAB zinc-finger proteins. Probably forms a corepressor complex required for activated KRAS-mediated promoter hypermethylation and transcriptional silencing of tumor suppressor genes (TSGs) or other tumor-related genes in colorectal cancer (CRC) cells. Required to maintain a transcriptionally repressive state of genes in undifferentiated embryonic stem cells (ESCs). In ESCs, in collaboration with TRIM28, is also required for H3K9me3 and silencing of endogenous and introduced retroviruses in a DNA-methylation independent-pathway. Associates at promoter regions of tumor suppressor genes (TSGs) leading to their gene silencing. The SETDB1-TRIM28-ZNF274 complex may play a role in recruiting ATRX to the 3'-exons of zinc-finger coding genes with atypical chromatin signatures to establish or maintain/protect H3K9me3 at these transcriptionally active regions. The polypeptide is Histone-lysine N-methyltransferase SETDB1 (Homo sapiens (Human)).